Here is a 475-residue protein sequence, read N- to C-terminus: SAM50-like protein SPAC17C9.06 (475 aa).

The POTRA domain maps to 44–130 (VGISSIRVTG…LDVTIQVKEK (87 aa)).

Belongs to the SAM50/omp85 family. As to quaternary structure, associates with the mitochondrial contact site and cristae organizing system (MICOS) complex (also known as MINOS or MitOS complex).

It is found in the mitochondrion outer membrane. In terms of biological role, may be required for the assembly pathway of mitochondrial outer membrane proteins. In Schizosaccharomyces pombe (strain 972 / ATCC 24843) (Fission yeast), this protein is SAM50-like protein SPAC17C9.06.